Reading from the N-terminus, the 451-residue chain is Glyceraldehyde-3-phosphate dehydrogenase B, chloroplastic (451 aa).

Residues 1-25 (MATHAALASTRIPTNTRFPSKTSHS) are disordered. A chloroplast-targeting transit peptide spans 1 to 84 (MATHAALAST…STAVKGVTVA (84 aa)). The span at 11 to 25 (RIPTNTRFPSKTSHS) shows a compositional bias: polar residues. Residues 95–96 (RI), D119, and R164 each bind NADP(+). Residues 238–240 (SCT), T269, R284, 297–298 (TG), and R320 contribute to the D-glyceraldehyde 3-phosphate site. C239 (nucleophile) is an active-site residue. N403 provides a ligand contact to NADP(+).

It belongs to the glyceraldehyde-3-phosphate dehydrogenase family. In terms of assembly, tetramer of either four A chains (GAPDH 2) or two A and two B chains (GAPDH 1).

The protein resides in the plastid. Its subcellular location is the chloroplast. It carries out the reaction D-glyceraldehyde 3-phosphate + phosphate + NADP(+) = (2R)-3-phospho-glyceroyl phosphate + NADPH + H(+). It participates in carbohydrate biosynthesis; Calvin cycle. The polypeptide is Glyceraldehyde-3-phosphate dehydrogenase B, chloroplastic (GAPB) (Pisum sativum (Garden pea)).